The following is a 275-amino-acid chain: uncharacterized protein (275 aa).

This is an uncharacterized protein from Enterobacteria phage T4 (Bacteriophage T4).